The sequence spans 544 residues: Probable protein kinase UbiB (544 aa).

Residues 123–501 form the Protein kinase domain; it reads EFDIKPLASA…KRQQATGKFL (379 aa). Residues 129 to 137 and K152 contribute to the ATP site; that span reads LASASIAQV. D287 acts as the Proton acceptor in catalysis. Helical transmembrane passes span 496 to 516 and 519 to 539; these read ATGKFLFGVGATLVVCSAILV and AYEQLSMASGIAGVTFWLLSW.

It belongs to the ABC1 family. UbiB subfamily.

The protein resides in the cell inner membrane. The protein operates within cofactor biosynthesis; ubiquinone biosynthesis [regulation]. Is probably a protein kinase regulator of UbiI activity which is involved in aerobic coenzyme Q (ubiquinone) biosynthesis. The polypeptide is Probable protein kinase UbiB (Vibrio parahaemolyticus serotype O3:K6 (strain RIMD 2210633)).